We begin with the raw amino-acid sequence, 397 residues long: Cystinosin (397 aa).

The first 24 residues, 1-24 (MDFSTHRLTTLLLLLLATVALGNA), serve as a signal peptide directing secretion. Residues 25–126 (QSSQLTVDSH…FVRVTVAKSR (102 aa)) lie on the Lumenal side of the membrane. N-linked (GlcNAc...) asparagine glycans are attached at residues asparagine 43 and asparagine 86. A helical transmembrane segment spans residues 127–147 (ALIYTSIIFGWVYFVAWSVSF). The PQ-loop 1 domain occupies 132–187 (SIIFGWVYFVAWSVSFYPQIWSNYRRKSVEGLNFDFLALNIVGFTLYSMFNCGLYF). At 148 to 167 (YPQIWSNYRRKSVEGLNFDF) the chain is on the cytoplasmic side. Residues 168–188 (LALNIVGFTLYSMFNCGLYFI) traverse the membrane as a helical segment. The Lumenal segment spans residues 189 to 210 (EDLQNEYEVRYPLGVNPVMLND). A helical transmembrane segment spans residues 211–231 (VVFSLHAMFATCITILQCFFY). At 232 to 239 (QRAQQRVS) the chain is on the cytoplasmic side. The chain crosses the membrane as a helical span at residues 240–260 (FIAYGILAIFAVVVVVSAGLA). Residues 261–263 (GGS) lie on the Lumenal side of the membrane. The helical transmembrane segment at 264–284 (VIHWLDFLYYCSYVKLTITII) threads the bilayer. Positions 271-327 (LYYCSYVKLTITIIKYVPQALMNYRRKSTSGWSIGNILLDFTGGTLSMLQMILNAHN) constitute a PQ-loop 2 domain. At 285-302 (KYVPQALMNYRRKSTSGW) the chain is on the cytoplasmic side. Residues 303-323 (SIGNILLDFTGGTLSMLQMIL) traverse the membrane as a helical segment. Topologically, residues 324 to 340 (NAHNYDDWVSIFGDPTK) are lumenal. The chain crosses the membrane as a helical span at residues 341–361 (FGLGLFSVLFDVFFMLQHYVF). At 362–397 (YRHSRESSSSDLTTVTDVQNRTNESPPPSEVTTEKY) the chain is on the cytoplasmic side. A compositionally biased stretch (polar residues) spans 373-385 (LTTVTDVQNRTNE). The tract at residues 373 to 397 (LTTVTDVQNRTNESPPPSEVTTEKY) is disordered.

This sequence belongs to the cystinosin family.

The protein localises to the lysosome membrane. The enzyme catalyses L-cystine(out) + H(+)(out) = L-cystine(in) + H(+)(in). Cystine/H(+) symporter that mediates export of cystine, the oxidized dimer of cysteine, from lysosomes. Involved in cysteine homeostasis during periods of fasting, which indirectly regulates mTORC1-mediated signaling by supporting de novo CoA synthesis, the TCA cycle and amino acid metabolism during periods of food shortage. Important for maintaining autophagy, and for development and survival during periods of fasting. This Drosophila melanogaster (Fruit fly) protein is Cystinosin.